The sequence spans 429 residues: MKKQRNLRSMAAQAIEQVVEQGQSLSNILPPLQQKVSDKDKALLQELCFGVLRTLSQSDWLINKLMARPMTGKQRTVHYLIMVGLYQLLYTRIPPHAALAETVEGAVAIKRPQLKGLINGVLRQFQRQQDELLAEFNASDARYLHPSWLLKRLQKAYPEQWQSIVEANNQRPPMWLRVNRTHHSRDSWLALLDEAGMKGFPHADYPDAVQLETPAPVHALPGFEEGWVTVQDASAQGCMTWLAPQNGEHILDLCAAPGGKTTHILEVAPEAQVLAVDIDEQRLSRVYDNLKRLGMKATVKQGDGRYPSQWCGEQQFDRILLDAPCSATGVIRRHPDIKWLRRDRDIPELAQLQSEILDAIWSHLKSGGTLVYATCSVLPEENSLQIKAFLQRTADAELCETGTPEQPGKQNLPGAEEGDGFFYAKLIKK.

Residues 254–260, aspartate 277, aspartate 303, and aspartate 322 contribute to the S-adenosyl-L-methionine site; that span reads CAAPGGK. Cysteine 375 acts as the Nucleophile in catalysis.

This sequence belongs to the class I-like SAM-binding methyltransferase superfamily. RsmB/NOP family.

It localises to the cytoplasm. It catalyses the reaction cytidine(967) in 16S rRNA + S-adenosyl-L-methionine = 5-methylcytidine(967) in 16S rRNA + S-adenosyl-L-homocysteine + H(+). Specifically methylates the cytosine at position 967 (m5C967) of 16S rRNA. This Escherichia coli O6:H1 (strain CFT073 / ATCC 700928 / UPEC) protein is Ribosomal RNA small subunit methyltransferase B.